Here is a 155-residue protein sequence, read N- to C-terminus: Myosin light chain alkali (155 aa).

EF-hand domains follow at residues 7–41 (REIE…LNLN) and 80–115 (GCYE…LGES).

Myosin is a hexamer of 2 heavy chains and 4 light chains.

The chain is Myosin light chain alkali (Mlc1) from Drosophila pseudoobscura pseudoobscura (Fruit fly).